Consider the following 130-residue polypeptide: Small ribosomal subunit protein uS9 (130 aa).

It belongs to the universal ribosomal protein uS9 family.

The sequence is that of Small ribosomal subunit protein uS9 from Citrobacter koseri (strain ATCC BAA-895 / CDC 4225-83 / SGSC4696).